Here is a 379-residue protein sequence, read N- to C-terminus: Protein RecA (379 aa).

The disordered stretch occupies residues M1–G23. Residues S7–L16 show a composition bias toward polar residues. G84–T91 is a binding site for ATP.

This sequence belongs to the RecA family.

Its subcellular location is the cytoplasm. Can catalyze the hydrolysis of ATP in the presence of single-stranded DNA, the ATP-dependent uptake of single-stranded DNA by duplex DNA, and the ATP-dependent hybridization of homologous single-stranded DNAs. It interacts with LexA causing its activation and leading to its autocatalytic cleavage. This Prochlorococcus marinus (strain MIT 9313) protein is Protein RecA.